The chain runs to 329 residues: tRNA N6-adenosine threonylcarbamoyltransferase (329 aa).

Fe cation is bound by residues His-110 and His-114. Residues 132–136, Asp-165, Gly-178, and Asn-271 each bind substrate; that span reads VISGG. Asp-299 provides a ligand contact to Fe cation.

It belongs to the KAE1 / TsaD family. The cofactor is Fe(2+).

The protein localises to the cytoplasm. It carries out the reaction L-threonylcarbamoyladenylate + adenosine(37) in tRNA = N(6)-L-threonylcarbamoyladenosine(37) in tRNA + AMP + H(+). In terms of biological role, required for the formation of a threonylcarbamoyl group on adenosine at position 37 (t(6)A37) in tRNAs that read codons beginning with adenine. Is involved in the transfer of the threonylcarbamoyl moiety of threonylcarbamoyl-AMP (TC-AMP) to the N6 group of A37, together with TsaE and TsaB. TsaD likely plays a direct catalytic role in this reaction. The sequence is that of tRNA N6-adenosine threonylcarbamoyltransferase from Neorickettsia sennetsu (strain ATCC VR-367 / Miyayama) (Ehrlichia sennetsu).